Here is a 100-residue protein sequence, read N- to C-terminus: Sec-independent protein translocase protein TatA (100 aa).

The chain crosses the membrane as a helical span at residues 1 to 21 (MGALRPWHIAVLVVVLILLFG). Positions 46 to 58 (LHDDDRDLAEKAD) are enriched in basic and acidic residues. The tract at residues 46-100 (LHDDDRDLAEKADAQAGYQPMPPQVQQGQHPQQSPYPAPPQQQPVVDPVQRTRDS) is disordered. Positions 69–78 (QVQQGQHPQQ) are enriched in low complexity.

It belongs to the TatA/E family. The Tat system comprises two distinct complexes: a TatABC complex, containing multiple copies of TatA, TatB and TatC subunits, and a separate TatA complex, containing only TatA subunits. Substrates initially bind to the TatABC complex, which probably triggers association of the separate TatA complex to form the active translocon.

Its subcellular location is the cell membrane. In terms of biological role, part of the twin-arginine translocation (Tat) system that transports large folded proteins containing a characteristic twin-arginine motif in their signal peptide across membranes. TatA could form the protein-conducting channel of the Tat system. This is Sec-independent protein translocase protein TatA from Salinispora tropica (strain ATCC BAA-916 / DSM 44818 / JCM 13857 / NBRC 105044 / CNB-440).